A 319-amino-acid chain; its full sequence is Tetrahydromethanopterin S-methyltransferase subunit H (319 aa).

The protein belongs to the MtrH family. In terms of assembly, the complex is composed of 8 subunits; MtrA, MtrB, MtrC, MtrD, MtrE, MtrF, MtrG and MtrH.

It carries out the reaction 5-methyl-5,6,7,8-tetrahydromethanopterin + coenzyme M + 2 Na(+)(in) = 5,6,7,8-tetrahydromethanopterin + methyl-coenzyme M + 2 Na(+)(out). Its pathway is one-carbon metabolism; methanogenesis from CO(2); methyl-coenzyme M from 5,10-methylene-5,6,7,8-tetrahydromethanopterin: step 2/2. Functionally, part of a complex that catalyzes the formation of methyl-coenzyme M and tetrahydromethanopterin from coenzyme M and methyl-tetrahydromethanopterin. This is an energy-conserving, sodium-ion translocating step. MtrH catalyzes the transfer of the methyl group from methyl-tetrahydromethanopterin to the corrinoid prosthetic group of MtrA. The chain is Tetrahydromethanopterin S-methyltransferase subunit H from Methanococcus maripaludis (strain C5 / ATCC BAA-1333).